The sequence spans 135 residues: ARGOS-like protein (135 aa).

Positions 71–122 are organ Size Related (OSR) domain; sequence FSLESMVVLVGLTASLLILPLILPPLPPPPFMLLLIPIGIMVLLMVLAFMPS. 2 helical membrane passes run 76–96 and 100–120; these read MVVL…LPPL and PFML…LAFM.

The protein belongs to the plant organ size related (OSR) protein family. In terms of tissue distribution, expressed in cotyledons, roots, flowers, siliques and leaves.

It localises to the membrane. It is found in the nucleus. Its subcellular location is the cytoplasm. The protein resides in the endoplasmic reticulum. In terms of biological role, promotes cell expansion-dependent organ growth, probably via a brassinosteroids signaling pathway. Acts downstream of BRI1. This Arabidopsis thaliana (Mouse-ear cress) protein is ARGOS-like protein (ARL).